The sequence spans 264 residues: Exodeoxyribonuclease YycJ (264 aa).

Histidine 58, histidine 60, aspartate 62, histidine 63, and aspartate 145 together coordinate a divalent metal cation.

Belongs to the metallo-beta-lactamase superfamily. Requires Fe(2+) as cofactor. Zn(2+) serves as cofactor. The cofactor is Mn(2+).

Functionally, 5'-&gt;3' double-stranded DNA exonuclease. May play a role in mutation mismatch repair (MMR). Required for accurate coordination of cell division with DNA replication. May play a role in cell wall metabolism. In Bacillus anthracis, this protein is Exodeoxyribonuclease YycJ.